Here is a 241-residue protein sequence, read N- to C-terminus: Meiotically up-regulated gene 130 protein (241 aa).

Its subcellular location is the mitochondrion. Has a role in meiosis. This Schizosaccharomyces pombe (strain 972 / ATCC 24843) (Fission yeast) protein is Meiotically up-regulated gene 130 protein (mug130).